We begin with the raw amino-acid sequence, 475 residues long: Rho GTPase-activating protein 15 (475 aa).

The segment at methionine 1–alanine 22 is disordered. Residues valine 80–aspartate 190 form the PH domain. The 190-residue stretch at serine 281–phenylalanine 470 folds into the Rho-GAP domain.

It localises to the cytoplasm. It is found in the membrane. Functionally, GTPase activator for the Rho-type GTPases by converting them to an inactive GDP-bound state. This is Rho GTPase-activating protein 15 (ARHGAP15) from Gallus gallus (Chicken).